Consider the following 539-residue polypeptide: Chaperonin GroEL (539 aa).

ATP is bound by residues 29-32 (TIGP), 86-90 (DGTTT), Gly-413, 476-478 (NAA), and Asp-492.

Belongs to the chaperonin (HSP60) family. As to quaternary structure, forms a cylinder of 14 subunits composed of two heptameric rings stacked back-to-back. Interacts with the co-chaperonin GroES.

The protein resides in the cytoplasm. It catalyses the reaction ATP + H2O + a folded polypeptide = ADP + phosphate + an unfolded polypeptide.. In terms of biological role, together with its co-chaperonin GroES, plays an essential role in assisting protein folding. The GroEL-GroES system forms a nano-cage that allows encapsulation of the non-native substrate proteins and provides a physical environment optimized to promote and accelerate protein folding. The polypeptide is Chaperonin GroEL (Pediococcus pentosaceus (strain ATCC 25745 / CCUG 21536 / LMG 10740 / 183-1w)).